A 306-amino-acid chain; its full sequence is Mitochondrial substrate carrier family protein M (306 aa).

The Mitochondrial intermembrane portion of the chain corresponds to 1-10; that stretch reads MRYILNNNVE. Solcar repeat units lie at residues 5-98, 108-195, and 207-299; these read LNNN…YKNI, LNTF…IKFY, and LNAS…IKKS. Residues 11 to 31 form a helical membrane-spanning segment; it reads GTSALLGSTVATAFLQPFDFL. The Mitochondrial matrix portion of the chain corresponds to 32–72; that stretch reads KIRLQGSGFASGGDLNKFKRVGVIDTCKNVLKNEGIKQFWR. Residues 73–89 form a helical membrane-spanning segment; sequence GSSPTIVASGIAWGTYM. Over 90 to 113 the chain is Mitochondrial intermembrane; the sequence is HFYEAYKNILKSKYNVTQLNTFDH. A helical membrane pass occupies residues 114–134; the sequence is FICAVGASATQVFITNPIFLI. The Mitochondrial matrix portion of the chain corresponds to 135 to 163; that stretch reads KTRMQLQTPGSANYYTGIFDGIKKTVKVE. Residues 164-184 form a helical membrane-spanning segment; sequence GFKGLYKGVIPSLWLTFHGGI. Topologically, residues 185-211 are mitochondrial intermembrane; sequence QMSSYEHIKFYFSSNSGKSLDSLNASE. Residues 212–232 form a helical membrane-spanning segment; the sequence is IFIASSISKFLASTILYPFQV. At 233–278 the chain is on the mitochondrial matrix side; that stretch reads VKTRLQDERNIPNQNNVRVYNGTKDVIFKILKNEGIIGFYRGLVPN. A helical transmembrane segment spans residues 279-296; the sequence is TLKVIPNTSITLLLYEEI. Over 297 to 306 the chain is Mitochondrial intermembrane; sequence KKSFNYIINE.

It belongs to the mitochondrial carrier (TC 2.A.29) family.

The protein localises to the mitochondrion inner membrane. Functionally, mitochondrial solute carriers shuttle metabolites, nucleotides, and cofactors through the mitochondrial inner membrane. Transports folate across the inner membranes of mitochondria. The protein is Mitochondrial substrate carrier family protein M (mcfM) of Dictyostelium discoideum (Social amoeba).